The sequence spans 318 residues: MPPPNSAPPAQVVFVTGPSGAGRSTVINALEDLGFEAIDNLPLSLLPRLLEGAPPDRPLALCIDPRTRDFDARDLIHAYEKLEQDPAYTADLVFIDCEPATLQRRYSETRRRHPLAPDADPADGIAIEREMLAPLRTRADVLIDTTPLTVHRTRDEVIRLFALDRAPAMSIQIMSFSYRRALPISADLVFDCRFLRNPHWAPELRAKDGRQSDVQAYVAQDARFEAFRTQINAMLDLLLPAFKEEGKSHLTVAFGCTGGRHRSVTLAELTARRLAEEGWQVSKRHRDVDKDASENSDRDRGASARTAASTDDGEAEQP.

An ATP-binding site is contributed by 17-24 (GPSGAGRS). 64–67 (DPRT) provides a ligand contact to GTP. The tract at residues 278 to 318 (GWQVSKRHRDVDKDASENSDRDRGASARTAASTDDGEAEQP) is disordered. Positions 286-302 (RDVDKDASENSDRDRGA) are enriched in basic and acidic residues.

This sequence belongs to the RapZ-like family.

Functionally, displays ATPase and GTPase activities. The polypeptide is Nucleotide-binding protein Jann_0539 (Jannaschia sp. (strain CCS1)).